The primary structure comprises 528 residues: Coiled-coil domain-containing protein 116 (528 aa).

A disordered region spans residues 43 to 68 (GHVPHPPSTCGSSALQNQRRNKRHPQ). Positions 51–60 (TCGSSALQNQ) are enriched in polar residues. Residues 81–104 (HVLDSLETVVEKATERMAAMKTEA) adopt a coiled-coil conformation. Disordered regions lie at residues 335–444 (PLFP…RQRA) and 497–528 (SSSP…THHS). Polar residues predominate over residues 363–378 (PTNSGQPHPTVSSPKT). Residue Ser389 is modified to Phosphoserine. Positions 419-429 (HSREKEPDSDP) are enriched in basic and acidic residues. Over residues 434 to 443 (PPVSLSSRQR) the composition is skewed to polar residues. Residues 497 to 510 (SSSPSSLCPEVTSS) show a composition bias toward low complexity.

It localises to the cytoplasm. It is found in the cytoskeleton. The protein localises to the microtubule organizing center. The protein resides in the centrosome. The chain is Coiled-coil domain-containing protein 116 (CCDC116) from Macaca fascicularis (Crab-eating macaque).